Here is a 381-residue protein sequence, read N- to C-terminus: Metacaspase-8 (381 aa).

Catalysis depends on residues His86 and Cys140. Cys140 carries the post-translational modification S-nitrosocysteine.

Belongs to the peptidase C14B family. Proteolytically processed; by an autocatalytic mechanism.

Cysteine protease that cleaves specifically after arginine residues. Does not cleave caspase-specific substrates. May be involved in the modulation of programmed cell death activated by oxidative stress. This Arabidopsis thaliana (Mouse-ear cress) protein is Metacaspase-8 (AMC8).